Reading from the N-terminus, the 639-residue chain is Chaperone protein DnaK (639 aa).

The residue at position 198 (threonine 198) is a Phosphothreonine; by autocatalysis. The segment covering 603–618 has biased composition (low complexity); that stretch reads AKAQTQGGAQEGAAKQ. The tract at residues 603 to 639 is disordered; that stretch reads AKAQTQGGAQEGAAKQSNATADDVVDAEFEEVKDDKK. Acidic residues predominate over residues 625–639; that stretch reads DVVDAEFEEVKDDKK.

This sequence belongs to the heat shock protein 70 family.

Functionally, acts as a chaperone. In Shewanella sp. (strain ANA-3), this protein is Chaperone protein DnaK.